The primary structure comprises 690 residues: Glycine--tRNA ligase beta subunit (690 aa).

It belongs to the class-II aminoacyl-tRNA synthetase family. As to quaternary structure, tetramer of two alpha and two beta subunits.

It localises to the cytoplasm. The catalysed reaction is tRNA(Gly) + glycine + ATP = glycyl-tRNA(Gly) + AMP + diphosphate. The sequence is that of Glycine--tRNA ligase beta subunit from Tolumonas auensis (strain DSM 9187 / NBRC 110442 / TA 4).